Consider the following 225-residue polypeptide: uncharacterized protein (225 aa).

The next 6 membrane-spanning stretches (helical) occupy residues 25–45, 57–77, 83–103, 109–129, 135–155, and 187–207; these read MMLALALIASFVSHFISIPFL, VFLIACAFFVSYSWALVITVA, FIWDGNNWIGILTLTIANFAI, LYFHIFAQIKLRWLWVFSLAT, LLTTLNGLLITPLYWYWFGYV, and IFALYSLFNVIKFTLVSLIGV.

It localises to the cell membrane. This is an uncharacterized protein from Mycoplasma pneumoniae (strain ATCC 29342 / M129 / Subtype 1) (Mycoplasmoides pneumoniae).